The following is a 75-amino-acid chain: UPF0270 protein PST_1436 (75 aa).

It belongs to the UPF0270 family.

In Stutzerimonas stutzeri (strain A1501) (Pseudomonas stutzeri), this protein is UPF0270 protein PST_1436.